Consider the following 505-residue polypeptide: T-cell activation GTPase-activating protein 1 (505 aa).

Disordered stretches follow at residues 81 to 147 (DDSL…SESS), 160 to 212 (QQDR…DPFT), 242 to 293 (QGHI…QREI), 311 to 339 (RTSSIGSEKSKDFSRDQLQKDLRKESQLS), and 414 to 441 (KPSTAVPPVPSHHGGDLSEGTPGGHRLS). A compositionally biased stretch (polar residues) spans 90-102 (SDVSTLQNDSAYD). A compositionally biased stretch (acidic residues) spans 203-212 (EGDEAEDPFT). A compositionally biased stretch (low complexity) spans 250-262 (SRSSPGESLGSSP). Basic and acidic residues-rich tracts occupy residues 283 to 292 (KTDKTKPQRE) and 318 to 336 (EKSKDFSRDQLQKDLRKES).

In Mus musculus (Mouse), this protein is T-cell activation GTPase-activating protein 1 (Tagap1).